The chain runs to 52 residues: Large ribosomal subunit protein eL39 (52 aa).

The protein belongs to the eukaryotic ribosomal protein eL39 family. In terms of assembly, interacts with YIH1.

In Encephalitozoon cuniculi (strain GB-M1) (Microsporidian parasite), this protein is Large ribosomal subunit protein eL39 (RPL39).